A 186-amino-acid polypeptide reads, in one-letter code: Putative 3-methyladenine DNA glycosylase (186 aa).

It belongs to the DNA glycosylase MPG family.

This Borreliella afzelii (strain PKo) (Borrelia afzelii) protein is Putative 3-methyladenine DNA glycosylase.